We begin with the raw amino-acid sequence, 830 residues long: Post-transcriptional regulator MKT1 (830 aa).

K4 participates in a covalent cross-link: Glycyl lysine isopeptide (Lys-Gly) (interchain with G-Cter in ubiquitin). The interaction with PBP1 stretch occupies residues 130 to 380; that stretch reads RSRGWTQWNN…SPATTVTKNA (251 aa). The segment at 347–400 is disordered; sequence DSEKNNKDGKKSNLSSPSSASSSASPATTVTKNASEKLTYEKSSTKEVRKPRDI. 3 positions are modified to phosphoserine: S358, S362, and S371. The span at 361–373 shows a compositional bias: low complexity; sequence SSPSSASSSASPA. A compositionally biased stretch (basic and acidic residues) spans 380–400; sequence ASEKLTYEKSSTKEVRKPRDI.

The protein belongs to the XPG/RAD2 endonuclease family. As to quaternary structure, interacts (via C-terminus) with PBP1 (via C-terminus).

The protein localises to the cytoplasm. Its subcellular location is the cytosol. Involved in 3'-UTR mediated RNA regulation. Binds to RNA-binding and RNA regulatory proteins. Complexes with PAB1-binding protein to promote mRNA interactions with poly(A)-binding protein. Promotes mating-type switching in mother cells by positively regulating HO expression. The polypeptide is Post-transcriptional regulator MKT1 (MKT1) (Saccharomyces cerevisiae (strain ATCC 204508 / S288c) (Baker's yeast)).